A 244-amino-acid chain; its full sequence is Protein A47 (244 aa).

Belongs to the orthopoxvirus A47 protein family.

The sequence is that of Protein A47 from Variola virus.